We begin with the raw amino-acid sequence, 93 residues long: Small ribosomal subunit protein uS19 (93 aa).

Belongs to the universal ribosomal protein uS19 family.

Its function is as follows. Protein S19 forms a complex with S13 that binds strongly to the 16S ribosomal RNA. The polypeptide is Small ribosomal subunit protein uS19 (Pseudarthrobacter chlorophenolicus (strain ATCC 700700 / DSM 12829 / CIP 107037 / JCM 12360 / KCTC 9906 / NCIMB 13794 / A6) (Arthrobacter chlorophenolicus)).